A 151-amino-acid chain; its full sequence is Probable cGMP 3',5'-cyclic phosphodiesterase subunit delta (151 aa).

It belongs to the PDE6D/unc-119 family. As to quaternary structure, interacts with Pde6.

Its subcellular location is the nucleus. The protein resides in the cytoplasm. The sequence is that of Probable cGMP 3',5'-cyclic phosphodiesterase subunit delta from Drosophila erecta (Fruit fly).